The following is a 200-amino-acid chain: dITP/XTP pyrophosphatase (200 aa).

A substrate-binding site is contributed by S16–K21. Residues E46 and D75 each contribute to the Mg(2+) site. The Proton acceptor role is filled by D75. Residues S76, F154 to D157, K177, and H182 to R183 contribute to the substrate site.

The protein belongs to the HAM1 NTPase family. In terms of assembly, homodimer. It depends on Mg(2+) as a cofactor.

The enzyme catalyses XTP + H2O = XMP + diphosphate + H(+). It catalyses the reaction dITP + H2O = dIMP + diphosphate + H(+). It carries out the reaction ITP + H2O = IMP + diphosphate + H(+). In terms of biological role, pyrophosphatase that catalyzes the hydrolysis of nucleoside triphosphates to their monophosphate derivatives, with a high preference for the non-canonical purine nucleotides XTP (xanthosine triphosphate), dITP (deoxyinosine triphosphate) and ITP. Seems to function as a house-cleaning enzyme that removes non-canonical purine nucleotides from the nucleotide pool, thus preventing their incorporation into DNA/RNA and avoiding chromosomal lesions. This is dITP/XTP pyrophosphatase from Prochlorococcus marinus (strain SARG / CCMP1375 / SS120).